Reading from the N-terminus, the 147-residue chain is MALKRIQKELSDLQRDPPAHCSAGPVGDDLFHWQATIMGPPDSAYQGGVFFLTVHFPTDYPFKPPKIAFTTKIYHPNINSNGSICLDILRSQWSPALTVSKVLLSICSLLCDPNPDDPLVPDIAQIYKSDKEKYNRHAREWTQKYAM.

One can recognise a UBC core domain in the interval 1-147; that stretch reads MALKRIQKEL…AREWTQKYAM (147 aa). The active-site Glycyl thioester intermediate is Cys85.

It belongs to the ubiquitin-conjugating enzyme family. In terms of assembly, component of a E3 ubiquitin ligase complex containing UBE2D1, SIAH1, CACYBP/SIP, SKP1, APC and TBL1X. Interacts with RNF11. In terms of processing, autoubiquitinated.

The protein resides in the cytoplasm. It catalyses the reaction S-ubiquitinyl-[E1 ubiquitin-activating enzyme]-L-cysteine + [E2 ubiquitin-conjugating enzyme]-L-cysteine = [E1 ubiquitin-activating enzyme]-L-cysteine + S-ubiquitinyl-[E2 ubiquitin-conjugating enzyme]-L-cysteine.. It carries out the reaction S-ubiquitinyl-[E1 ubiquitin-activating enzyme]-L-cysteine + [acceptor protein]-L-lysine = [E1 ubiquitin-activating enzyme]-L-cysteine + N(6)-monoubiquitinyl-[acceptor protein]-L-lysine.. Its pathway is protein modification; protein ubiquitination. Functionally, accepts ubiquitin from the E1 complex and catalyzes its covalent attachment to other proteins. In vitro catalyzes 'Lys-48'-linked polyubiquitination. Mediates the selective degradation of short-lived and abnormal proteins. Functions in the E6/E6-AP-induced ubiquitination of p53/TP53. Mediates ubiquitination of PEX5 and auto-ubiquitination of STUB1, TRAF6 and TRIM63/MURF1. Ubiquitinates STUB1-associated HSP90AB1 in vitro. Lacks inherent specificity for any particular lysine residue of ubiquitin. Essential for viral activation of IRF3. Mediates polyubiquitination of CYP3A4. In Bos taurus (Bovine), this protein is Ubiquitin-conjugating enzyme E2 D1 (UBE2D1).